The sequence spans 258 residues: Imidazole glycerol phosphate synthase subunit HisF (258 aa).

Residues Asp11 and Asp130 contribute to the active site.

It belongs to the HisA/HisF family. In terms of assembly, heterodimer of HisH and HisF.

Its subcellular location is the cytoplasm. It catalyses the reaction 5-[(5-phospho-1-deoxy-D-ribulos-1-ylimino)methylamino]-1-(5-phospho-beta-D-ribosyl)imidazole-4-carboxamide + L-glutamine = D-erythro-1-(imidazol-4-yl)glycerol 3-phosphate + 5-amino-1-(5-phospho-beta-D-ribosyl)imidazole-4-carboxamide + L-glutamate + H(+). Its pathway is amino-acid biosynthesis; L-histidine biosynthesis; L-histidine from 5-phospho-alpha-D-ribose 1-diphosphate: step 5/9. Its function is as follows. IGPS catalyzes the conversion of PRFAR and glutamine to IGP, AICAR and glutamate. The HisF subunit catalyzes the cyclization activity that produces IGP and AICAR from PRFAR using the ammonia provided by the HisH subunit. The polypeptide is Imidazole glycerol phosphate synthase subunit HisF (Xanthomonas axonopodis pv. citri (strain 306)).